We begin with the raw amino-acid sequence, 469 residues long: Cysteine--tRNA ligase (469 aa).

Residue cysteine 28 coordinates Zn(2+). The 'HIGH' region motif lies at 30 to 40 (CTVYDLCHIGH). Zn(2+) is bound by residues cysteine 216, histidine 241, and glutamate 245. The 'KMSKS' region motif lies at 273–277 (KMSKS). Lysine 276 contributes to the ATP binding site.

This sequence belongs to the class-I aminoacyl-tRNA synthetase family. Monomer. Zn(2+) serves as cofactor.

It localises to the cytoplasm. The catalysed reaction is tRNA(Cys) + L-cysteine + ATP = L-cysteinyl-tRNA(Cys) + AMP + diphosphate. The sequence is that of Cysteine--tRNA ligase from Colwellia psychrerythraea (strain 34H / ATCC BAA-681) (Vibrio psychroerythus).